We begin with the raw amino-acid sequence, 522 residues long: tRNA-2-methylthio-N(6)-dimethylallyladenosine synthase (522 aa).

One can recognise an MTTase N-terminal domain in the interval 24–140; the sequence is RTYEVKTYGC…LPTLLQRAEH (117 aa). [4Fe-4S] cluster contacts are provided by cysteine 33, cysteine 69, cysteine 103, cysteine 177, cysteine 181, and cysteine 184. One can recognise a Radical SAM core domain in the interval 163 to 399; that stretch reads RESAYAGWVS…MVVQEQVCEE (237 aa). The region spanning 402–473 is the TRAM domain; the sequence is QKLIGTTVEL…PFFLIADSGV (72 aa).

This sequence belongs to the methylthiotransferase family. MiaB subfamily. As to quaternary structure, monomer. Requires [4Fe-4S] cluster as cofactor.

It localises to the cytoplasm. The catalysed reaction is N(6)-dimethylallyladenosine(37) in tRNA + (sulfur carrier)-SH + AH2 + 2 S-adenosyl-L-methionine = 2-methylsulfanyl-N(6)-dimethylallyladenosine(37) in tRNA + (sulfur carrier)-H + 5'-deoxyadenosine + L-methionine + A + S-adenosyl-L-homocysteine + 2 H(+). Its function is as follows. Catalyzes the methylthiolation of N6-(dimethylallyl)adenosine (i(6)A), leading to the formation of 2-methylthio-N6-(dimethylallyl)adenosine (ms(2)i(6)A) at position 37 in tRNAs that read codons beginning with uridine. In Corynebacterium glutamicum (strain ATCC 13032 / DSM 20300 / JCM 1318 / BCRC 11384 / CCUG 27702 / LMG 3730 / NBRC 12168 / NCIMB 10025 / NRRL B-2784 / 534), this protein is tRNA-2-methylthio-N(6)-dimethylallyladenosine synthase.